The sequence spans 48 residues: Putative protein P' (48 aa).

The chain is Putative protein P' from Bos taurus (Bovine).